The chain runs to 167 residues: S-ribosylhomocysteine lyase (167 aa).

Fe cation is bound by residues His-54, His-58, and Cys-128.

The protein belongs to the LuxS family. As to quaternary structure, homodimer. The cofactor is Fe cation.

The enzyme catalyses S-(5-deoxy-D-ribos-5-yl)-L-homocysteine = (S)-4,5-dihydroxypentane-2,3-dione + L-homocysteine. Involved in the synthesis of autoinducer 2 (AI-2) which is secreted by bacteria and is used to communicate both the cell density and the metabolic potential of the environment. The regulation of gene expression in response to changes in cell density is called quorum sensing. Catalyzes the transformation of S-ribosylhomocysteine (RHC) to homocysteine (HC) and 4,5-dihydroxy-2,3-pentadione (DPD). In Haemophilus influenzae (strain PittEE), this protein is S-ribosylhomocysteine lyase.